We begin with the raw amino-acid sequence, 478 residues long: ATP-dependent DNA helicase RecQ (478 aa).

A Helicase ATP-binding domain is found at 28-202 (IDCLLARRDC…VEGLNLRSPE (175 aa)). 41–48 (LPTGGGKS) contributes to the ATP binding site. The DEAH box signature appears at 142 to 145 (DEAH). Residues 229-380 (QLRRFLLKHL…RAEVLSQQIP (152 aa)) enclose the Helicase C-terminal domain. Residues Cys-447, Cys-467, Cys-470, and Cys-473 each coordinate Zn(2+).

The protein belongs to the helicase family. RecQ subfamily. Mg(2+) is required as a cofactor. Zn(2+) serves as cofactor.

It catalyses the reaction Couples ATP hydrolysis with the unwinding of duplex DNA by translocating in the 3'-5' direction.. The catalysed reaction is ATP + H2O = ADP + phosphate + H(+). An ATP-dependent DNA helicase which unwinds DNA in a 3'-5' direction. The protein is ATP-dependent DNA helicase RecQ of Synechocystis sp. (strain ATCC 27184 / PCC 6803 / Kazusa).